Here is a 704-residue protein sequence, read N- to C-terminus: Glycine--tRNA ligase beta subunit (704 aa).

It belongs to the class-II aminoacyl-tRNA synthetase family. As to quaternary structure, tetramer of two alpha and two beta subunits.

Its subcellular location is the cytoplasm. The enzyme catalyses tRNA(Gly) + glycine + ATP = glycyl-tRNA(Gly) + AMP + diphosphate. The polypeptide is Glycine--tRNA ligase beta subunit (Rhizobium johnstonii (strain DSM 114642 / LMG 32736 / 3841) (Rhizobium leguminosarum bv. viciae)).